The primary structure comprises 668 residues: tRNA 5-methylaminomethyl-2-thiouridine biosynthesis bifunctional protein MnmC (668 aa).

The interval 1–245 is tRNA (mnm(5)s(2)U34)-methyltransferase; it reads MKHYSIQPAN…KREMLCGVME (245 aa). An FAD-dependent cmnm(5)s(2)U34 oxidoreductase region spans residues 270 to 668; it reads IGGGIACALL…LLKGKAVKAG (399 aa).

It in the N-terminal section; belongs to the methyltransferase superfamily. tRNA (mnm(5)s(2)U34)-methyltransferase family. This sequence in the C-terminal section; belongs to the DAO family. The cofactor is FAD.

Its subcellular location is the cytoplasm. It carries out the reaction 5-aminomethyl-2-thiouridine(34) in tRNA + S-adenosyl-L-methionine = 5-methylaminomethyl-2-thiouridine(34) in tRNA + S-adenosyl-L-homocysteine + H(+). Functionally, catalyzes the last two steps in the biosynthesis of 5-methylaminomethyl-2-thiouridine (mnm(5)s(2)U) at the wobble position (U34) in tRNA. Catalyzes the FAD-dependent demodification of cmnm(5)s(2)U34 to nm(5)s(2)U34, followed by the transfer of a methyl group from S-adenosyl-L-methionine to nm(5)s(2)U34, to form mnm(5)s(2)U34. This chain is tRNA 5-methylaminomethyl-2-thiouridine biosynthesis bifunctional protein MnmC, found in Shigella boydii serotype 4 (strain Sb227).